The chain runs to 143 residues: D-aminoacyl-tRNA deacylase (143 aa).

The Gly-cisPro motif, important for rejection of L-amino acids signature appears at 135–136 (GP).

Belongs to the DTD family. As to quaternary structure, homodimer.

It localises to the cytoplasm. The catalysed reaction is glycyl-tRNA(Ala) + H2O = tRNA(Ala) + glycine + H(+). It catalyses the reaction a D-aminoacyl-tRNA + H2O = a tRNA + a D-alpha-amino acid + H(+). Its function is as follows. An aminoacyl-tRNA editing enzyme that deacylates mischarged D-aminoacyl-tRNAs. Also deacylates mischarged glycyl-tRNA(Ala), protecting cells against glycine mischarging by AlaRS. Acts via tRNA-based rather than protein-based catalysis; rejects L-amino acids rather than detecting D-amino acids in the active site. By recycling D-aminoacyl-tRNA to D-amino acids and free tRNA molecules, this enzyme counteracts the toxicity associated with the formation of D-aminoacyl-tRNA entities in vivo and helps enforce protein L-homochirality. The polypeptide is D-aminoacyl-tRNA deacylase (Mycobacterium avium (strain 104)).